Consider the following 776-residue polypeptide: Photosystem I P700 chlorophyll a apoprotein A1 (776 aa).

8 helical membrane passes run 76–99 (IFSA…FHGA), 162–185 (LMAL…FHYH), 201–225 (LQHH…HVAN), 309–327 (VAHH…GHVY), 368–391 (WHAQ…HHMY), 407–433 (LGLF…IAVI), 455–477 (AIIS…LYIH), and 557–575 (LMIH…LILL). Residues C599 and C608 each coordinate [4Fe-4S] cluster. The next 2 membrane-spanning stretches (helical) occupy residues 615 to 636 (HVFL…YFSW) and 690 to 712 (LSGY…MFLF). H701 contributes to the divinylchlorophyll a' binding site. Residues M709 and Y717 each coordinate divinyl chlorophyll a. Residue W718 participates in phylloquinone binding. Residues 750 to 770 (AVGVTHFLFGGIVTTWAFFHA) form a helical membrane-spanning segment.

Belongs to the PsaA/PsaB family. In terms of assembly, the PsaA/B heterodimer binds the P700 divinyl chlorophyll special pair and subsequent electron acceptors. PSI consists of a core antenna complex that captures photons, and an electron transfer chain that converts photonic excitation into a charge separation. The cyanobacterial PSI reaction center is composed of one copy each of PsaA,B,C,D,E,F,I,J,K,L,M and X, and forms trimeric complexes. It depends on PSI electron transfer chain: 5 divinyl chlorophyll a, 1 divinyl chlorophyll a', 2 phylloquinones and 3 4Fe-4S clusters. PSI core antenna: 90 divinyl chlorophyll a, 22 carotenoids, 3 phospholipids and 1 galactolipid. P700 is a divinyl chlorophyll a/divinyl chlorophyll a' dimer, A0 is one or more divinyl chlorophyll a, A1 is one or both phylloquinones and FX is a shared 4Fe-4S iron-sulfur center. as a cofactor.

It is found in the cellular thylakoid membrane. The enzyme catalyses reduced [plastocyanin] + hnu + oxidized [2Fe-2S]-[ferredoxin] = oxidized [plastocyanin] + reduced [2Fe-2S]-[ferredoxin]. In terms of biological role, psaA and PsaB bind P700, the primary electron donor of photosystem I (PSI), as well as the electron acceptors A0, A1 and FX. PSI is a plastocyanin/cytochrome c6-ferredoxin oxidoreductase, converting photonic excitation into a charge separation, which transfers an electron from the donor P700 chlorophyll pair to the spectroscopically characterized acceptors A0, A1, FX, FA and FB in turn. Oxidized P700 is reduced on the lumenal side of the thylakoid membrane by plastocyanin or cytochrome c6. This chain is Photosystem I P700 chlorophyll a apoprotein A1, found in Prochlorococcus marinus (strain MIT 9303).